Reading from the N-terminus, the 150-residue chain is Probable FKBP-type 16 kDa peptidyl-prolyl cis-trans isomerase (150 aa).

Positions 14–88 constitute a PPIase FKBP-type domain; sequence NTEVTLHFAL…PNPQNVQIIP (75 aa).

The protein belongs to the FKBP-type PPIase family.

The enzyme catalyses [protein]-peptidylproline (omega=180) = [protein]-peptidylproline (omega=0). PPIases accelerate the folding of proteins. The chain is Probable FKBP-type 16 kDa peptidyl-prolyl cis-trans isomerase (yaaD) from Pseudomonas fluorescens.